The sequence spans 436 residues: Serine--tRNA ligase (436 aa).

Thr242–Glu244 is a binding site for L-serine. Arg273 to Glu275 contacts ATP. Glu296 lines the L-serine pocket. Glu360–Ser363 provides a ligand contact to ATP. Position 395 (Ser395) interacts with L-serine.

The protein belongs to the class-II aminoacyl-tRNA synthetase family. Type-1 seryl-tRNA synthetase subfamily. As to quaternary structure, homodimer. The tRNA molecule binds across the dimer.

The protein resides in the cytoplasm. The catalysed reaction is tRNA(Ser) + L-serine + ATP = L-seryl-tRNA(Ser) + AMP + diphosphate + H(+). It carries out the reaction tRNA(Sec) + L-serine + ATP = L-seryl-tRNA(Sec) + AMP + diphosphate + H(+). It functions in the pathway aminoacyl-tRNA biosynthesis; selenocysteinyl-tRNA(Sec) biosynthesis; L-seryl-tRNA(Sec) from L-serine and tRNA(Sec): step 1/1. Functionally, catalyzes the attachment of serine to tRNA(Ser). Is also able to aminoacylate tRNA(Sec) with serine, to form the misacylated tRNA L-seryl-tRNA(Sec), which will be further converted into selenocysteinyl-tRNA(Sec). The protein is Serine--tRNA ligase of Polynucleobacter asymbioticus (strain DSM 18221 / CIP 109841 / QLW-P1DMWA-1) (Polynucleobacter necessarius subsp. asymbioticus).